A 253-amino-acid chain; its full sequence is Pimeloyl-[acyl-carrier protein] methyl ester esterase (253 aa).

Substrate contacts are provided by residues Trp-18, 78-79 (SL), and 139-143 (FLALD). Ser-78 serves as the catalytic Nucleophile. Residues Asp-203 and His-231 contribute to the active site. Substrate is bound at residue His-231.

The protein belongs to the AB hydrolase superfamily. Carboxylesterase BioH family. Monomer.

It is found in the cytoplasm. It catalyses the reaction 6-carboxyhexanoyl-[ACP] methyl ester + H2O = 6-carboxyhexanoyl-[ACP] + methanol + H(+). Its pathway is cofactor biosynthesis; biotin biosynthesis. The physiological role of BioH is to remove the methyl group introduced by BioC when the pimeloyl moiety is complete. It allows to synthesize pimeloyl-ACP via the fatty acid synthetic pathway through the hydrolysis of the ester bonds of pimeloyl-ACP esters. This Xanthomonas oryzae pv. oryzae (strain MAFF 311018) protein is Pimeloyl-[acyl-carrier protein] methyl ester esterase.